The primary structure comprises 97 residues: Large ribosomal subunit protein bL28 (97 aa).

The protein belongs to the bacterial ribosomal protein bL28 family.

The sequence is that of Large ribosomal subunit protein bL28 from Nitrobacter winogradskyi (strain ATCC 25391 / DSM 10237 / CIP 104748 / NCIMB 11846 / Nb-255).